Consider the following 150-residue polypeptide: MRALIQRVLRGRVTVEGSEVGAIGPGLVVLVGAGQGDGEADARYVAEKIAHLRIFEDEQGKMNRSVSDVGGEVLVVSQFTLYGDCRKGRRPSFTQAAPPDEARRLVEAVVAELRKFGLTVATGQFQAHMVVEIINDGPVTLMVEGRGGES.

Residues 137-138 (GP) carry the Gly-cisPro motif, important for rejection of L-amino acids motif.

It belongs to the DTD family. As to quaternary structure, homodimer.

The protein localises to the cytoplasm. The catalysed reaction is glycyl-tRNA(Ala) + H2O = tRNA(Ala) + glycine + H(+). It carries out the reaction a D-aminoacyl-tRNA + H2O = a tRNA + a D-alpha-amino acid + H(+). Functionally, an aminoacyl-tRNA editing enzyme that deacylates mischarged D-aminoacyl-tRNAs. Also deacylates mischarged glycyl-tRNA(Ala), protecting cells against glycine mischarging by AlaRS. Acts via tRNA-based rather than protein-based catalysis; rejects L-amino acids rather than detecting D-amino acids in the active site. By recycling D-aminoacyl-tRNA to D-amino acids and free tRNA molecules, this enzyme counteracts the toxicity associated with the formation of D-aminoacyl-tRNA entities in vivo and helps enforce protein L-homochirality. In Heliobacterium modesticaldum (strain ATCC 51547 / Ice1), this protein is D-aminoacyl-tRNA deacylase.